We begin with the raw amino-acid sequence, 154 residues long: Protein aau3 (154 aa).

The HTH rrf2-type domain maps to 2 to 132; that stretch reads RLTKQTNYAV…QGYTIDDLVK (131 aa). Residues Cys-91, Cys-99, and Cys-105 each contribute to the [2Fe-2S] cluster site.

Requires [2Fe-2S] cluster as cofactor.

Its function is as follows. Required for growth utilizing PHB cycle intermediates. In Rhizobium meliloti (strain 1021) (Ensifer meliloti), this protein is Protein aau3 (aau3).